The primary structure comprises 145 residues: Transmembrane protein 170A (145 aa).

At 1-50 the chain is on the lumenal side; it reads MIEALIVGEMQDVQIGFVKQILSLNLVPRSNNTTCGNNTSLCDFSEMWYG. N-linked (GlcNAc...) asparagine glycans are attached at residues N31 and N37. The chain crosses the membrane as a helical span at residues 51-71; sequence VFLWAVVSSLIFHLPAALLAL. The Cytoplasmic portion of the chain corresponds to 72-81; that stretch reads ATLRRHKVAR. The chain crosses the membrane as a helical span at residues 82 to 102; that stretch reads FFPLGILLMGIIGPLFGGVLT. Topologically, residues 103–117 are lumenal; that stretch reads SAAIAGVYKAAGKSM. Residues 118–138 traverse the membrane as a helical segment; the sequence is FSLEALVFGVGQSLFIFIISF. The Cytoplasmic portion of the chain corresponds to 139–145; that stretch reads LRILATL.

This sequence belongs to the TMEM170 family.

The protein localises to the endoplasmic reticulum membrane. Its subcellular location is the nucleus envelope. In terms of biological role, may regulate membrane morphogenesis in the endoplasmic reticulum (ER) by promoting ER sheet formation at the expense of ER tubules. The polypeptide is Transmembrane protein 170A (tmem170a) (Danio rerio (Zebrafish)).